A 471-amino-acid chain; its full sequence is BPI fold-containing family B member 1 (471 aa).

Positions 1–18 are cleaved as a signal peptide; it reads MTNPWIVSLLLGATLVQA. Asn150, Asn157, Asn260, and Asn397 each carry an N-linked (GlcNAc...) asparagine glycan. Cys154 and Cys197 are disulfide-bonded.

It belongs to the BPI/LBP/Plunc superfamily. Plunc family.

It is found in the secreted. May play a role in innate immunity in mouth, nose and lungs. Binds bacterial lipopolysaccharide (LPS) and modulates the cellular responses to LPS. This Rattus norvegicus (Rat) protein is BPI fold-containing family B member 1 (Bpifb1).